The sequence spans 134 residues: Histone-like protein Rv3852 (134 aa).

A compositionally biased stretch (basic and acidic residues) spans 1–10 (MPDPQDRPDS). The disordered stretch occupies residues 1–68 (MPDPQDRPDS…PAEAPVSLQQ (68 aa)). A compositionally biased stretch (basic residues) spans 23 to 48 (LPAKKAAKKAPARKTPAKKAPAKKTP). A helical membrane pass occupies residues 111 to 128 (PVPLIVAVTLSLLALLLI).

In terms of assembly, homodimer in solution. Is probably able to self-associate in higher oligomers along the DNA molecules. Interacts with the N-terminal region of Wag31.

It localises to the cell inner membrane. Can interact directly in vitro with the compound agrimophol, a phloroglucinol from the A.pilosa plant, whose extracts have been used in traditional Chinese medicine to treat pulmonary infections. Interaction with agrimophol leads to disruption of Rv3852's DNA binding function. Functionally, binds DNA in vitro. It has been proposed that Rv3852 plays a role in nucleoid organization and may function as an anchorage to tether the DNA to the membrane. However, it was later shown that it has no influence on nucleoid shape or compaction. It plays no role in virulence and only a minor role in the control of transcription, and does not appear to function as a typical nucleoid-associated protein. Interacts with Wag31, an important cell shape and cell wall integrity determinant, and facilitates the localization of Wag31 to the cell poles and the cell wall, thus enabling nascent peptidoglycan synthesis. The protein is Histone-like protein Rv3852 of Mycobacterium tuberculosis (strain ATCC 25618 / H37Rv).